The following is a 527-amino-acid chain: Glutamate--cysteine ligase (527 aa).

This sequence belongs to the glutamate--cysteine ligase type 1 family. Type 1 subfamily.

The catalysed reaction is L-cysteine + L-glutamate + ATP = gamma-L-glutamyl-L-cysteine + ADP + phosphate + H(+). It participates in sulfur metabolism; glutathione biosynthesis; glutathione from L-cysteine and L-glutamate: step 1/2. The chain is Glutamate--cysteine ligase from Pseudomonas aeruginosa (strain ATCC 15692 / DSM 22644 / CIP 104116 / JCM 14847 / LMG 12228 / 1C / PRS 101 / PAO1).